An 872-amino-acid polypeptide reads, in one-letter code: Chaperone protein ClpB 2 (872 aa).

One can recognise a Clp R domain in the interval 6–148 (PNQFTEKAWE…KNIIKQVRGS (143 aa)). Repeat regions lie at residues 9-73 (FTEK…IQRQ) and 85-148 (LGRS…VRGS). The NBD1 stretch occupies residues 161–342 (QSLEKYGRDL…RRFQQVYVDQ (182 aa)). 208–215 (GEPGVGKT) lines the ATP pocket. The segment at 343-551 (PSVEDTISIL…IAEIISKWTG (209 aa)) is linker. Positions 393 to 527 (IDLVDEAAAR…TERELSQTQG (135 aa)) form a coiled coil. The segment at 561–772 (EKEKLLHLED…RIDEVIIFHS (212 aa)) is NBD2. Position 611–618 (611–618 (GPTGVGKT)) interacts with ATP. A C-terminal region spans residues 773-872 (LDKKELRQIV…SRLPVEVFSS (100 aa)).

It belongs to the ClpA/ClpB family. Homohexamer. The oligomerization is ATP-dependent.

It is found in the cytoplasm. Functionally, part of a stress-induced multi-chaperone system, it is involved in the recovery of the cell from heat-induced damage, in cooperation with DnaK, DnaJ and GrpE. Acts before DnaK, in the processing of protein aggregates. Protein binding stimulates the ATPase activity; ATP hydrolysis unfolds the denatured protein aggregates, which probably helps expose new hydrophobic binding sites on the surface of ClpB-bound aggregates, contributing to the solubilization and refolding of denatured protein aggregates by DnaK. This is Chaperone protein ClpB 2 (clpB2) from Nostoc sp. (strain PCC 7120 / SAG 25.82 / UTEX 2576).